The chain runs to 354 residues: Ribosomal RNA large subunit methyltransferase K (354 aa).

This sequence belongs to the methyltransferase superfamily.

It is found in the cytoplasm. The enzyme catalyses guanosine(2069) in 23S rRNA + S-adenosyl-L-methionine = N(2)-methylguanosine(2069) in 23S rRNA + S-adenosyl-L-homocysteine + H(+). Its function is as follows. Specifically methylates the guanine in position 2069 (m7G2069) of 23S rRNA. This is Ribosomal RNA large subunit methyltransferase K (rlmK) from Neisseria meningitidis serogroup B (strain ATCC BAA-335 / MC58).